Reading from the N-terminus, the 120-residue chain is Adenosylhomocysteinase (120 aa).

Asn-34 contributes to the NAD(+) binding site.

This sequence belongs to the adenosylhomocysteinase family. Requires NAD(+) as cofactor.

It is found in the cytoplasm. It carries out the reaction S-adenosyl-L-homocysteine + H2O = L-homocysteine + adenosine. It functions in the pathway amino-acid biosynthesis; L-homocysteine biosynthesis; L-homocysteine from S-adenosyl-L-homocysteine: step 1/1. In terms of biological role, may play a key role in the regulation of the intracellular concentration of adenosylhomocysteine. In Streptomyces fradiae (Streptomyces roseoflavus), this protein is Adenosylhomocysteinase (ahcY).